Consider the following 521-residue polypeptide: U4/U6 small nuclear ribonucleoprotein Prp4 (521 aa).

K26 carries the N6-acetyllysine modification. WD repeat units follow at residues 228–267 (GDDRPISYCHFSPNSKMLATACWSGLCKLWSVPDCSLLHT), 270–317 (GHNT…PVAD), 320–359 (GHTVRVARVMWHPSGRFLGTTCYDRSWRLWDLEAQEEILH), 362–401 (GHSMGVYDIAFHQDGSLAGTGGLDAFGRVWDLRTGRCIMF), 404–443 (GHLKEIYGINFSPNGYHIATGSGDNTCKVWDLRQRRCVYT), 446–486 (AHQN…PLKT), and 489–521 (GHEGKVMGLDISSDGQLIATCSYDRTFKLWMAE).

In terms of assembly, component of the precatalytic spliceosome (spliceosome B complex). Component of the U4/U6-U5 tri-snRNP complex, a building block of the precatalytic spliceosome (spliceosome B complex). The U4/U6-U5 tri-snRNP complex is composed of the U4, U6 and U5 snRNAs and at least PRPF3, PRPF4, PRPF6, PRPF8, PRPF31, SNRNP200, TXNL4A, SNRNP40, SNRPB, SNRPD1, SNRPD2, SNRPD3, SNRPE, SNRPF, SNRPG, DDX23, CD2BP2, PPIH, SNU13, EFTUD2, SART1 and USP39, plus LSM2, LSM3, LSM4, LSM5, LSM6, LSM7 and LSM8. Interacts directly with PRPF18, PPIH and PRPF3. Part of a heteromeric complex containing PPIH, PRPF3 and PRPF4 that is stable in the absence of RNA. Interacts with ERCC6.

It is found in the nucleus. The protein localises to the nucleus speckle. In terms of biological role, plays a role in pre-mRNA splicing as component of the U4/U6-U5 tri-snRNP complex that is involved in spliceosome assembly, and as component of the precatalytic spliceosome (spliceosome B complex). This chain is U4/U6 small nuclear ribonucleoprotein Prp4 (Prpf4), found in Mus musculus (Mouse).